Reading from the N-terminus, the 192-residue chain is Imidazoleglycerol-phosphate dehydratase (192 aa).

Belongs to the imidazoleglycerol-phosphate dehydratase family.

Its subcellular location is the cytoplasm. The catalysed reaction is D-erythro-1-(imidazol-4-yl)glycerol 3-phosphate = 3-(imidazol-4-yl)-2-oxopropyl phosphate + H2O. Its pathway is amino-acid biosynthesis; L-histidine biosynthesis; L-histidine from 5-phospho-alpha-D-ribose 1-diphosphate: step 6/9. This Staphylococcus aureus (strain MRSA252) protein is Imidazoleglycerol-phosphate dehydratase.